The following is a 349-amino-acid chain: Protein-glutamate methylesterase/protein-glutamine glutaminase 3 (349 aa).

The 118-residue stretch at aspartate 2–serine 119 folds into the Response regulatory domain. Aspartate 52 is modified (4-aspartylphosphate). The CheB-type methylesterase domain occupies glutamate 157–leucine 340. Catalysis depends on residues serine 169, histidine 196, and aspartate 289.

Belongs to the CheB family. In terms of processing, phosphorylated by CheA. Phosphorylation of the N-terminal regulatory domain activates the methylesterase activity.

The protein resides in the cytoplasm. It carries out the reaction [protein]-L-glutamate 5-O-methyl ester + H2O = L-glutamyl-[protein] + methanol + H(+). It catalyses the reaction L-glutaminyl-[protein] + H2O = L-glutamyl-[protein] + NH4(+). In terms of biological role, involved in chemotaxis. Part of a chemotaxis signal transduction system that modulates chemotaxis in response to various stimuli. Catalyzes the demethylation of specific methylglutamate residues introduced into the chemoreceptors (methyl-accepting chemotaxis proteins or MCP) by CheR. Also mediates the irreversible deamidation of specific glutamine residues to glutamic acid. The chain is Protein-glutamate methylesterase/protein-glutamine glutaminase 3 from Hahella chejuensis (strain KCTC 2396).